The primary structure comprises 330 residues: MTKIMFFGTRDYEKEMALNWGKKNNVEVTTSKELLSSATVDQLKDYDGVTTMQFGKLENDVYPKLESYGIKQIAQRTAGFDMYDLDLAKKHNIVISNVPSYSPETIAEYSVSIALQLVRRFPDIERRVQAHDFTWQAEIMSKPVKNMTVAIIGTGRIGAATAKIYAGFGATITAYDAYPNKDLDFLTYKDSVKEAIKDADIISLHVPANKESYHLFDKTMFDHVKKGAILVNAARGAVINTPDLIDAVNDGTLLGAAIDTYENEAAYFTNDWTNKDIDDKTLLELIEHERILVTPHIAFFSDEAVQNLVEGGLNAALSVINTGTCETRLN.

NAD(+)-binding positions include 156 to 157, Asp176, 206 to 207, 233 to 235, and Asp259; these read RI, VP, and AAR. Arg235 is a catalytic residue. Residue Glu264 is part of the active site. His296 acts as the Proton donor in catalysis.

This sequence belongs to the D-isomer specific 2-hydroxyacid dehydrogenase family.

The enzyme catalyses (R)-lactate + NAD(+) = pyruvate + NADH + H(+). This chain is D-lactate dehydrogenase (ldhD), found in Staphylococcus aureus (strain MRSA252).